Here is a 746-residue protein sequence, read N- to C-terminus: MEHTYEYSWIIPFIPLPVPILLGVGLLLFPTATKNLRRMWTFLSIFLLSIIMIFSLYLSIQQIFLSCIHQNVWSWTINNEFSFEFGYFIDPLTSIMSILITTVGILVLIYSDNYMSHDQGYLRFFAYMGFFNTSMLGLVTSSNLIQVYFFWELVGMCSYLLIGFWFTRPIAANACQKAFVTNRVGDFGLLLGILGLYWITGSFEFQDLFEIFNNLVLNNRVNLLFLTLCAFLLFVGPIAKSAQFPLHVWLPDAMEGPTPISALIHAATMVAAGIFLVARLLPLFIVIPSIMYIISLIGIITVLLGATLALAQKDIKRGLAYSTMSQLGYMMLALGMGSYRSALFHLITHAYSKALLFLGSGSIIHSMEAIVGYSPDKSQNMILMGGLTKHVPITKIAFLVGTLSLCGIPPLACFWSKDEILNDSLLFSPIFAIIAFSTAGLTAFYMFRIYLLTFEGHLNTYFINYSGKKSSSVYSISLWGKEEEKKLNRNFGLVPLLTMNNTKRASFFCKKTYKISNNVRNQTFITVENFGLNPRTFYYPHESDNTILFPMLVLLLFTLFIGAIGIPFTQEGLDFDILSKLFTPSINLLHKNSESFVDWYEFLRNATFSVSIAFFGIFIAYYLYKPFYSSLLNLTLLNSFQKLNSKRIRWEKLINFVYNWSYNRGYIDAFFKTSLIESIRRLAKQTNFFDKRIIDGITNGVGITSFFVGEVTKYIGGSRISSYLFLYLSYVLIFLMILFFFYFEKF.

Helical transmembrane passes span 9 to 29 (WIIP…LLLF), 40 to 60 (WTFL…YLSI), 89 to 109 (IDPL…LVLI), 125 to 145 (FAYM…SNLI), 147 to 167 (VYFF…FWFT), 185 to 205 (GDFG…SFEF), 221 to 241 (VNLL…IAKS), 258 to 278 (TPIS…FLVA), 280 to 300 (LLPL…IGII), 327 to 347 (LGYM…FHLI), 354 to 374 (ALLF…VGYS), 396 to 416 (IAFL…CFWS), 425 to 445 (LLFS…TAFY), 547 to 567 (ILFP…IGIP), 608 to 628 (FSVS…KPFY), and 723 to 743 (YLFL…FFYF).

This sequence belongs to the complex I subunit 5 family. NDH is composed of at least 16 different subunits, 5 of which are encoded in the nucleus.

The protein resides in the plastid. It localises to the chloroplast thylakoid membrane. It carries out the reaction a plastoquinone + NADH + (n+1) H(+)(in) = a plastoquinol + NAD(+) + n H(+)(out). The enzyme catalyses a plastoquinone + NADPH + (n+1) H(+)(in) = a plastoquinol + NADP(+) + n H(+)(out). NDH shuttles electrons from NAD(P)H:plastoquinone, via FMN and iron-sulfur (Fe-S) centers, to quinones in the photosynthetic chain and possibly in a chloroplast respiratory chain. The immediate electron acceptor for the enzyme in this species is believed to be plastoquinone. Couples the redox reaction to proton translocation, and thus conserves the redox energy in a proton gradient. This chain is NAD(P)H-quinone oxidoreductase subunit 5, chloroplastic (ndhF), found in Nasturtium officinale (Watercress).